The chain runs to 475 residues: Argininosuccinate lyase (475 aa).

Belongs to the lyase 1 family. Argininosuccinate lyase subfamily.

The protein localises to the cytoplasm. The catalysed reaction is 2-(N(omega)-L-arginino)succinate = fumarate + L-arginine. It functions in the pathway amino-acid biosynthesis; L-arginine biosynthesis; L-arginine from L-ornithine and carbamoyl phosphate: step 3/3. The chain is Argininosuccinate lyase from Streptomyces griseus subsp. griseus (strain JCM 4626 / CBS 651.72 / NBRC 13350 / KCC S-0626 / ISP 5235).